Consider the following 216-residue polypeptide: Octanoyltransferase (216 aa).

Residues 31–205 (STTRDEVWLV…ELVTLLDYEQ (175 aa)) enclose the BPL/LPL catalytic domain. Residues 70–77 (RGGQVTYH), 137–139 (SLG), and 150–152 (GLA) contribute to the substrate site. The active-site Acyl-thioester intermediate is Cys168.

This sequence belongs to the LipB family.

The protein localises to the cytoplasm. It carries out the reaction octanoyl-[ACP] + L-lysyl-[protein] = N(6)-octanoyl-L-lysyl-[protein] + holo-[ACP] + H(+). Its pathway is protein modification; protein lipoylation via endogenous pathway; protein N(6)-(lipoyl)lysine from octanoyl-[acyl-carrier-protein]: step 1/2. Catalyzes the transfer of endogenously produced octanoic acid from octanoyl-acyl-carrier-protein onto the lipoyl domains of lipoate-dependent enzymes. Lipoyl-ACP can also act as a substrate although octanoyl-ACP is likely to be the physiological substrate. This chain is Octanoyltransferase, found in Vibrio cholerae serotype O1 (strain ATCC 39315 / El Tor Inaba N16961).